The following is a 238-amino-acid chain: MVHLRRTTSPYWWPIPRKAGGVWAVRPSPGPHSLAYSIPLALVIRDVLRYAKTLREARMIISRGYIKVDGVVRRNYKFPVGLMDVVEIVPTGEIYRVVPDERSYYALVPITSEEADLKLLRVEGKTAVKGGRLQVHFHDGRNLIMPAETARQIKTFDSVLYDLKARTVRSHIPMRLGVYAVVTHGGNVGFHGQLSEIVWTLKRRQSVVLLKRGEEAKRTILDYIMAVGAEAPVIKISP.

The region spanning 38–109 (IPLALVIRDV…DERSYYALVP (72 aa)) is the S4 RNA-binding domain.

Belongs to the eukaryotic ribosomal protein eS4 family.

The chain is Small ribosomal subunit protein eS4 from Pyrobaculum neutrophilum (strain DSM 2338 / JCM 9278 / NBRC 100436 / V24Sta) (Thermoproteus neutrophilus).